We begin with the raw amino-acid sequence, 450 residues long: Glucose-6-phosphate isomerase (450 aa).

Residue Glu291 is the Proton donor of the active site. Residues His312 and Lys426 contribute to the active site.

Belongs to the GPI family.

The protein localises to the cytoplasm. It catalyses the reaction alpha-D-glucose 6-phosphate = beta-D-fructose 6-phosphate. It functions in the pathway carbohydrate biosynthesis; gluconeogenesis. It participates in carbohydrate degradation; glycolysis; D-glyceraldehyde 3-phosphate and glycerone phosphate from D-glucose: step 2/4. Its function is as follows. Catalyzes the reversible isomerization of glucose-6-phosphate to fructose-6-phosphate. The chain is Glucose-6-phosphate isomerase from Clostridium perfringens (strain SM101 / Type A).